The primary structure comprises 362 residues: GMP reductase (362 aa).

NADP(+) contacts are provided by residues 26-27, Lys-78, 129-131, and 180-181; these read SR, DVA, and IG. The K(+) site is built by Gly-181, Gly-183, and Cys-186. Residue Cys-186 is the Thioimidate intermediate of the active site. The active-site Proton donor/acceptor is the Thr-188. Arg-189 serves as a coordination point for K(+). Residues 219-221, 242-243, 268-270, and 286-290 contribute to the GMP site; these read DGG, GG, GMS, and RASEG. NADP(+) is bound by residues Met-269, 285-286, and 314-317; these read YR and STCT.

Belongs to the IMPDH/GMPR family.

The enzyme catalyses IMP + NH4(+) + NADP(+) = GMP + NADPH + 2 H(+). Functionally, catalyzes the irreversible NADPH-dependent deamination of GMP to IMP. It functions in the conversion of nucleobase, nucleoside and nucleotide derivatives of G to A nucleotides, and in maintaining the intracellular balance of A and G nucleotides. The sequence is that of GMP reductase from Phytophthora infestans (Potato late blight agent).